The following is a 189-amino-acid chain: dCTP deaminase, dUMP-forming (189 aa).

DCTP contacts are provided by residues 101-106, Asp119, 127-129, Gln148, Tyr162, Lys170, and Gln174; these read KSSLGR and TLE. The active-site Proton donor/acceptor is the Glu129. Residues 163-189 form a disordered region; it reads GSGKLGSKYQGQRGPTPSKAYLNFPNK.

It belongs to the dCTP deaminase family. As to quaternary structure, homotrimer.

It catalyses the reaction dCTP + 2 H2O = dUMP + NH4(+) + diphosphate. It participates in pyrimidine metabolism; dUMP biosynthesis; dUMP from dCTP: step 1/1. Functionally, bifunctional enzyme that catalyzes both the deamination of dCTP to dUTP and the hydrolysis of dUTP to dUMP without releasing the toxic dUTP intermediate. The polypeptide is dCTP deaminase, dUMP-forming (Corynebacterium glutamicum (strain R)).